Consider the following 438-residue polypeptide: Ribosomal protein uS12 methylthiotransferase RimO (438 aa).

Residues 6 to 118 form the MTTase N-terminal domain; it reads KQLCLISLGC…IDILIAKKQN (113 aa). [4Fe-4S] cluster is bound by residues C15, C49, C81, C150, C154, and C157. In terms of domain architecture, Radical SAM core spans 136-364; it reads TGSSVHAYVK…NKIALKHQHN (229 aa).

The protein belongs to the methylthiotransferase family. RimO subfamily. [4Fe-4S] cluster is required as a cofactor.

Its subcellular location is the cytoplasm. It catalyses the reaction L-aspartate(89)-[ribosomal protein uS12]-hydrogen + (sulfur carrier)-SH + AH2 + 2 S-adenosyl-L-methionine = 3-methylsulfanyl-L-aspartate(89)-[ribosomal protein uS12]-hydrogen + (sulfur carrier)-H + 5'-deoxyadenosine + L-methionine + A + S-adenosyl-L-homocysteine + 2 H(+). In terms of biological role, catalyzes the methylthiolation of an aspartic acid residue of ribosomal protein uS12. This chain is Ribosomal protein uS12 methylthiotransferase RimO, found in Helicobacter acinonychis (strain Sheeba).